A 326-amino-acid polypeptide reads, in one-letter code: tRNA-modifying protein YgfZ (326 aa).

The folate site is built by tryptophan 27 and tryptophan 189.

Belongs to the tRNA-modifying YgfZ family.

It is found in the cytoplasm. In terms of biological role, folate-binding protein involved in regulating the level of ATP-DnaA and in the modification of some tRNAs. It is probably a key factor in regulatory networks that act via tRNA modification, such as initiation of chromosomal replication. The chain is tRNA-modifying protein YgfZ from Escherichia coli O139:H28 (strain E24377A / ETEC).